Consider the following 455-residue polypeptide: uncharacterized protein (455 aa).

Residues 1 to 27 form the signal peptide; sequence MSQRQQFQFLLSFLILIFLKFIIQIRC. Over 29–434 the chain is Extracellular; sequence ESNGVIIIKN…GDDENLINSS (406 aa). N-linked (GlcNAc...) asparagine glycosylation is found at Asn136, Asn148, Asn210, and Asn298. Residues 383 to 402 form a disordered region; it reads SSSTTSTTSSSSSSSSSTTT. N-linked (GlcNAc...) asparagine glycans are attached at residues Asn421 and Asn432. A helical membrane pass occupies residues 435 to 455; it reads SVIKFSTPIIMIIIILINIKF.

The protein localises to the membrane. This is an uncharacterized protein from Dictyostelium discoideum (Social amoeba).